Reading from the N-terminus, the 599-residue chain is Growth factor receptor-bound protein 10 (599 aa).

Over residues 1 to 23 (MNNDINSSVESLNSACNMQSDTD) the composition is skewed to polar residues. The interval 1–122 (MNNDINSSVE…QPPAKHFPPG (122 aa)) is disordered. The span at 32 to 43 (QSASNQPSASSS) shows a compositional bias: low complexity. Over residues 44 to 61 (RGQPQASPRQKMQRSQPV) the composition is skewed to polar residues. Residue Ser-50 is modified to Phosphoserine. A compositionally biased stretch (pro residues) spans 97–118 (GSPPSVAPSSLPPPPSQPPAKH). Ser-98 carries the post-translational modification Phosphoserine; by MTOR, MAPK1 and MAPK3. A Ras-associating domain is found at 171-255 (LRKDVKVFSE…SKFLFRKNYA (85 aa)). The 110-residue stretch at 295–404 (CPEIQGFLQV…WMTAFRLLKY (110 aa)) folds into the PH domain. Ser-433 is modified (phosphoserine; by MTOR and PKB/AKT1). Position 436 is a phosphoserine (Ser-436). Ser-481 carries the post-translational modification Phosphoserine; by MTOR, MAPK1 and MAPK3. An SH2 domain is found at 498–594 (WFHGRISREE…VLPCKLKHHC (97 aa)).

The protein belongs to the GRB7/10/14 family. Interacts with ligand-activated tyrosine kinase receptors, including FGFR1, INSR, IGF1R, MET and PDGFRB in a phosphotyrosine-dependent manner through the SH2 domain. Poorly binds to the EGFR. Directly interacts with MAP3K14/NIK and is recruited to the EGFR-ERBB2 complex. Interacts with GIGYF1/PERQ1 and GIGYF2/TNRC15. When unphosphorylated, interacts with AKT1 and when phosphorylated with YWHAE/14-3-3 epsilon. Interacts with NEDD4. Interacts with LRP6, thus interfering with the binding of AXIN1 to LRP6. Binds relatively non-specifically to several phosphoinositides, including PI(5)P, PI(4,5)P2, PI(3,4)P2 and PI(3,4,5)P3, with modest affinities through the PH domain. Binds to activated NRAS. Phosphorylated on serine residues upon EGF, FGF and PDGF stimulation.

It localises to the cytoplasm. With respect to regulation, phosphorylation by mTORC1 stabilizes and activates GRB10 constituting a feedback pathway by which mTORC1 inhibits INSR-dependent signaling. Adapter protein which modulates coupling of a number of cell surface receptor kinases with specific signaling pathways. Binds to, and suppress signals from, activated receptors tyrosine kinases, including the insulin (INSR) and insulin-like growth factor (IGF1R) receptors. The inhibitory effect can be achieved by 2 mechanisms: interference with the signaling pathway and increased receptor degradation. Delays and reduces AKT1 phosphorylation in response to insulin stimulation. Blocks association between INSR and IRS1 and IRS2 and prevents insulin-stimulated IRS1 and IRS2 tyrosine phosphorylation. Recruits NEDD4 to IGF1R, leading to IGF1R ubiquitination, increased internalization and degradation by both the proteasomal and lysosomal pathways. A similar role in the mediation of ubiquitination also has been suggested with INSR. Negatively regulates Wnt signaling by interacting with LRP6 intracellular portion and interfering with the binding of AXIN1 to LRP6. Positive regulator of the KDR/VEGFR-2 signaling pathway. May inhibit NEDD4-mediated degradation of KDR/VEGFR-2. This chain is Growth factor receptor-bound protein 10 (Grb10), found in Rattus norvegicus (Rat).